The primary structure comprises 349 residues: Bifunctional nitrilase/nitrile hydratase NIT4A (349 aa).

A CN hydrolase domain is found at 29–301 (VRATVVQAST…EALISADLDL (273 aa)). Glu-69 functions as the Proton acceptor in the catalytic mechanism. Lys-156 is an active-site residue. The Nucleophile role is filled by Cys-190.

The protein belongs to the carbon-nitrogen hydrolase superfamily. Nitrilase family. Ubiquitous.

The enzyme catalyses L-asparagine = 3-cyano-L-alanine + H2O. It carries out the reaction 3-cyano-L-alanine + 2 H2O = L-aspartate + NH4(+). Involved in the cyanide detoxification pathway. Has nitrilase and nitrile-hydratase activity in the ratio 4.0:1, producing both asparagine and aspartic acid from beta-cyano-L-alanine (Ala(CN)). Can also use 3-phenylpropionitrile as substrate, but not indole-3-acetonitrile. The protein is Bifunctional nitrilase/nitrile hydratase NIT4A (NIT4A) of Lupinus angustifolius (Narrow-leaved blue lupine).